We begin with the raw amino-acid sequence, 61 residues long: MAKKALINKAAAKPKFKVRGYTRCQRCGRPRSVFRKFGLCRVCFREMAHAGELPGVSKSSW.

4 residues coordinate Zn(2+): Cys-24, Cys-27, Cys-40, and Cys-43.

It belongs to the universal ribosomal protein uS14 family. Zinc-binding uS14 subfamily. Part of the 30S ribosomal subunit. Contacts proteins S3 and S10. Zn(2+) serves as cofactor.

Its function is as follows. Binds 16S rRNA, required for the assembly of 30S particles and may also be responsible for determining the conformation of the 16S rRNA at the A site. The protein is Small ribosomal subunit protein uS14B of Saccharopolyspora erythraea (strain ATCC 11635 / DSM 40517 / JCM 4748 / NBRC 13426 / NCIMB 8594 / NRRL 2338).